Reading from the N-terminus, the 291-residue chain is Lipoyl synthase (291 aa).

[4Fe-4S] cluster contacts are provided by Cys35, Cys40, Cys46, Cys61, Cys65, Cys68, and Ser273. The region spanning 47-262 is the Radical SAM core domain; the sequence is FGKRQATFLI…KEKALAMGFE (216 aa).

Belongs to the radical SAM superfamily. Lipoyl synthase family. It depends on [4Fe-4S] cluster as a cofactor.

The protein resides in the cytoplasm. The catalysed reaction is [[Fe-S] cluster scaffold protein carrying a second [4Fe-4S](2+) cluster] + N(6)-octanoyl-L-lysyl-[protein] + 2 oxidized [2Fe-2S]-[ferredoxin] + 2 S-adenosyl-L-methionine + 4 H(+) = [[Fe-S] cluster scaffold protein] + N(6)-[(R)-dihydrolipoyl]-L-lysyl-[protein] + 4 Fe(3+) + 2 hydrogen sulfide + 2 5'-deoxyadenosine + 2 L-methionine + 2 reduced [2Fe-2S]-[ferredoxin]. Its pathway is protein modification; protein lipoylation via endogenous pathway; protein N(6)-(lipoyl)lysine from octanoyl-[acyl-carrier-protein]: step 2/2. Its function is as follows. Catalyzes the radical-mediated insertion of two sulfur atoms into the C-6 and C-8 positions of the octanoyl moiety bound to the lipoyl domains of lipoate-dependent enzymes, thereby converting the octanoylated domains into lipoylated derivatives. This is Lipoyl synthase from Geobacter sp. (strain M21).